A 332-amino-acid chain; its full sequence is 3-ketodihydrosphingosine reductase (332 aa).

The signal sequence occupies residues 1-25 (MLLLAAAGLVAFVLLLYMVSPLISP). The Cytoplasmic segment spans residues 26–270 (KPLALPGAHV…GNFNSSIGSD (245 aa)). NADPH-binding residues include Gly39, Ser41, Ser42, Gly43, Arg64, Lys68, and Asp93. Positions 39-43 (GGSSG) match the GXSXG motif. Ser172 serves as the catalytic Proton donor. The active-site Proton acceptor is the Tyr186. Positions 186 and 190 each coordinate NADP(+). Lys190 (lowers pKa of active site Tyr) is an active-site residue. A helical membrane pass occupies residues 271 to 291 (GYMLSSLTCGMAPVTSITEGL). The Lumenal portion of the chain corresponds to 292–293 (QQ). The helical transmembrane segment at 294-314 (VVTMGLFRTIALFYLGSFDNI) threads the bilayer. At 315-332 (VRRCMVQKAKPEVVDKTA) the chain is on the cytoplasmic side.

This sequence belongs to the short-chain dehydrogenases/reductases (SDR) family.

The protein localises to the endoplasmic reticulum membrane. It carries out the reaction sphinganine + NADP(+) = 3-oxosphinganine + NADPH + H(+). It functions in the pathway lipid metabolism; sphingolipid metabolism. In terms of biological role, catalyzes the reduction of 3'-oxosphinganine (3-ketodihydrosphingosine/KDS) to sphinganine (dihydrosphingosine/DHS), the second step of de novo sphingolipid biosynthesis. This chain is 3-ketodihydrosphingosine reductase (Kdsr), found in Mus musculus (Mouse).